Reading from the N-terminus, the 422-residue chain is UDP-N-acetylglucosamine 1-carboxyvinyltransferase (422 aa).

22–23 (KN) contacts phosphoenolpyruvate. Residue R93 coordinates UDP-N-acetyl-alpha-D-glucosamine. The active-site Proton donor is C117. At C117 the chain carries 2-(S-cysteinyl)pyruvic acid O-phosphothioketal. UDP-N-acetyl-alpha-D-glucosamine contacts are provided by residues 122-126 (RPVDQ), D309, and I331.

This sequence belongs to the EPSP synthase family. MurA subfamily.

Its subcellular location is the cytoplasm. It carries out the reaction phosphoenolpyruvate + UDP-N-acetyl-alpha-D-glucosamine = UDP-N-acetyl-3-O-(1-carboxyvinyl)-alpha-D-glucosamine + phosphate. It participates in cell wall biogenesis; peptidoglycan biosynthesis. Cell wall formation. Adds enolpyruvyl to UDP-N-acetylglucosamine. The chain is UDP-N-acetylglucosamine 1-carboxyvinyltransferase from Delftia acidovorans (strain DSM 14801 / SPH-1).